The primary structure comprises 294 residues: tRNA dimethylallyltransferase (294 aa).

Residue glycine 10 to threonine 17 participates in ATP binding. Substrate is bound at residue threonine 12 to threonine 17. The interaction with substrate tRNA stretch occupies residues aspartate 35–glutamine 38.

It belongs to the IPP transferase family. In terms of assembly, monomer. Requires Mg(2+) as cofactor.

It catalyses the reaction adenosine(37) in tRNA + dimethylallyl diphosphate = N(6)-dimethylallyladenosine(37) in tRNA + diphosphate. Catalyzes the transfer of a dimethylallyl group onto the adenine at position 37 in tRNAs that read codons beginning with uridine, leading to the formation of N6-(dimethylallyl)adenosine (i(6)A). This is tRNA dimethylallyltransferase from Streptococcus suis (strain 98HAH33).